Reading from the N-terminus, the 510-residue chain is NAD(P)H-quinone oxidoreductase subunit 2 B, chloroplastic (510 aa).

13 helical membrane-spanning segments follow: residues 24 to 44 (LLLF…GLIL), 59 to 79 (WFYF…LFRW), 99 to 119 (IFQF…VEYI), 124 to 144 (MAIT…MFLC), 149 to 169 (LITI…LSGY), 184 to 204 (LLMG…LYGL), 229 to 249 (ISIA…LAPF), 262 to 284 (TPVV…TRIF), 295 to 315 (WHLL…LIAI), 323 to 343 (MLAY…IVGD), 354 to 374 (YMLF…LFGL), 395 to 415 (ALSL…AGFF), and 418 to 438 (LHLF…IGLL).

The protein belongs to the complex I subunit 2 family. NDH is composed of at least 16 different subunits, 5 of which are encoded in the nucleus.

The protein resides in the plastid. It is found in the chloroplast thylakoid membrane. It carries out the reaction a plastoquinone + NADH + (n+1) H(+)(in) = a plastoquinol + NAD(+) + n H(+)(out). The enzyme catalyses a plastoquinone + NADPH + (n+1) H(+)(in) = a plastoquinol + NADP(+) + n H(+)(out). Functionally, NDH shuttles electrons from NAD(P)H:plastoquinone, via FMN and iron-sulfur (Fe-S) centers, to quinones in the photosynthetic chain and possibly in a chloroplast respiratory chain. The immediate electron acceptor for the enzyme in this species is believed to be plastoquinone. Couples the redox reaction to proton translocation, and thus conserves the redox energy in a proton gradient. The sequence is that of NAD(P)H-quinone oxidoreductase subunit 2 B, chloroplastic from Lemna minor (Common duckweed).